A 658-amino-acid polypeptide reads, in one-letter code: Glycogen debranching enzyme (658 aa).

Residue Asp-335 is the Nucleophile of the active site. Glu-370 acts as the Proton donor in catalysis.

Belongs to the glycosyl hydrolase 13 family.

It catalyses the reaction Hydrolysis of (1-&gt;6)-alpha-D-glucosidic linkages to branches with degrees of polymerization of three or four glucose residues in limit dextrin.. It functions in the pathway glycan degradation; glycogen degradation. Removes maltotriose and maltotetraose chains that are attached by 1,6-alpha-linkage to the limit dextrin main chain, generating a debranched limit dextrin. The polypeptide is Glycogen debranching enzyme (Erwinia tasmaniensis (strain DSM 17950 / CFBP 7177 / CIP 109463 / NCPPB 4357 / Et1/99)).